A 411-amino-acid polypeptide reads, in one-letter code: Glutamate dehydrogenase 1, mitochondrial (411 aa).

A mitochondrion-targeting transit peptide spans 1 to 18; the sequence is MNALAATSRNFKQAAKLL. Lys102 is an active-site residue.

Belongs to the Glu/Leu/Phe/Val dehydrogenases family.

Its subcellular location is the mitochondrion. The catalysed reaction is L-glutamate + NAD(+) + H2O = 2-oxoglutarate + NH4(+) + NADH + H(+). The enzyme catalyses L-glutamate + NADP(+) + H2O = 2-oxoglutarate + NH4(+) + NADPH + H(+). This is Glutamate dehydrogenase 1, mitochondrial (GDH1) from Oryza sativa subsp. indica (Rice).